The primary structure comprises 212 residues: Small ribosomal subunit protein uS5 (212 aa).

One can recognise an S5 DRBM domain in the interval 48–111 (LEDEVLDINM…DIAKLNIIDV (64 aa)).

Belongs to the universal ribosomal protein uS5 family. As to quaternary structure, part of the 30S ribosomal subunit. Contacts protein S4.

Functionally, with S4 and S12 plays an important role in translational accuracy. The protein is Small ribosomal subunit protein uS5 of Haloarcula marismortui (strain ATCC 43049 / DSM 3752 / JCM 8966 / VKM B-1809) (Halobacterium marismortui).